A 537-amino-acid polypeptide reads, in one-letter code: Leucine-rich repeat LGI family member 4 (537 aa).

The N-terminal stretch at Met1–Ala19 is a signal peptide. 4 LRR repeats span residues Thr53 to Arg74, Ser77 to Gly98, His101 to Gly122, and Ser125 to Gly146. One can recognise an LRRCT domain in the interval Asn158 to Ala208. N-linked (GlcNAc...) asparagine glycosylation is present at Asn177. 7 EAR repeats span residues Glu210 to Tyr252, Arg256 to Ser298, Arg302 to Gly349, Gly351 to Gly394, Arg396 to Gly439, Met441 to Pro483, and Leu487 to Glu532.

Can bind to ADAM11, ADAM22 and ADAM23. In terms of tissue distribution, widely expressed, with highest expression in brain.

It is found in the secreted. In terms of biological role, component of Schwann cell signaling pathway(s) that controls axon segregation and myelin formation. This chain is Leucine-rich repeat LGI family member 4 (LGI4), found in Homo sapiens (Human).